An 89-amino-acid chain; its full sequence is Small ribosomal subunit protein bS20 (89 aa).

The tract at residues 1 to 20 (MANHKSAEKRARQTIKRTER) is disordered.

It belongs to the bacterial ribosomal protein bS20 family.

Its function is as follows. Binds directly to 16S ribosomal RNA. The polypeptide is Small ribosomal subunit protein bS20 (Campylobacter concisus (strain 13826)).